The following is an 800-amino-acid chain: Phenylalanine--tRNA ligase beta subunit (800 aa).

The tRNA-binding domain maps to 39-154; sequence TKDIKNLVVG…ESQVPGTDAL (116 aa). The B5 domain occupies 408-483; that stretch reads AFITPIDITA…RIYGYDDIPS (76 aa). Mg(2+) is bound by residues Asp-461, Asp-467, Glu-470, and Glu-471. Residues 708-800 form the FDX-ACB domain; that stretch reads PRFPGMSRDI…ALIEQGAVIR (93 aa).

The protein belongs to the phenylalanyl-tRNA synthetase beta subunit family. Type 1 subfamily. As to quaternary structure, tetramer of two alpha and two beta subunits. Mg(2+) serves as cofactor.

It localises to the cytoplasm. The catalysed reaction is tRNA(Phe) + L-phenylalanine + ATP = L-phenylalanyl-tRNA(Phe) + AMP + diphosphate + H(+). In Staphylococcus aureus (strain MSSA476), this protein is Phenylalanine--tRNA ligase beta subunit.